The following is a 538-amino-acid chain: MSRLSSIYSQHRTSGLRSDRSIMPNSTSNSLRTISSVHLPYNHRARNFHISHAVGDSSEHVIINGQASPSKVVQADAAALGTIAADMAPVVDGFSADDDELDLDSPTEGFSSIPEAIEDIRQGKYVIVVDDEDRENEGDLIMAASKVTPEAMAFIVRHGTGIVCVSMKEDDLERLELPLMVTTKENEEKLRTAFTVSVDAKEGTTTGVSAKDRANTVLALASPNSKPEDFNRPGHIFPLKYREGGVLKRAGHTEASVDLAMLAGLPPAAVLCEIVDDDDGSMALLPKLQDFARRENLKIISIADLIRYRRKRDRLVERVCVTPLQLQWGSFQSYCYRSLIDGMEHIAMVKGDVGDGQDILVRVHSECLTGDIFGSARCDCGNQLALAMTMIEKTGRGVVVYLRGHEGRGIGLGHKLRAYNLQDDGRDTVEANEDLGLPVDSREYGIGAQILRDLGVRTMRLMTNNPAKYTGLKGYGLSVLGRVPLLTPITNENRRYMETKRLKMGHVYGTRPSGNTSTLADGGIKKEQDQIDSASEQE.

Positions 1-16 (MSRLSSIYSQHRTSGL) are enriched in polar residues. The tract at residues 1-29 (MSRLSSIYSQHRTSGLRSDRSIMPNSTSN) is disordered. Residues 1 to 73 (MSRLSSIYSQ…NGQASPSKVV (73 aa)) constitute a chloroplast transit peptide. Residues 46-311 (RNFHISHAVG…IADLIRYRRK (266 aa)) are DHBP synthase. D-ribulose 5-phosphate-binding positions include 134 to 135 (RE), aspartate 139, 249 to 253 (RAGHT), and glutamate 273. Glutamate 135 lines the Mg(2+) pocket. Histidine 252 contributes to the Mg(2+) binding site. Residues 312 to 530 (RDRLVERVCV…DGGIKKEQDQ (219 aa)) are GTP cyclohydrolase II. 362-366 (RVHSE) contributes to the GTP binding site. Zn(2+) contacts are provided by cysteine 367, cysteine 378, and cysteine 380. GTP contacts are provided by residues glutamine 383, 406–408 (EGR), and threonine 428. Aspartate 440 functions as the Proton acceptor; for GTP cyclohydrolase activity in the catalytic mechanism. The active-site Nucleophile; for GTP cyclohydrolase activity is arginine 442. Residues threonine 463 and lysine 468 each coordinate GTP. The tract at residues 506 to 538 (HVYGTRPSGNTSTLADGGIKKEQDQIDSASEQE) is disordered.

It in the N-terminal section; belongs to the DHBP synthase family. The protein in the C-terminal section; belongs to the GTP cyclohydrolase II family. Mg(2+) serves as cofactor. Requires Mn(2+) as cofactor. Zn(2+) is required as a cofactor.

The protein resides in the plastid. It is found in the chloroplast. It catalyses the reaction D-ribulose 5-phosphate = (2S)-2-hydroxy-3-oxobutyl phosphate + formate + H(+). The catalysed reaction is GTP + 4 H2O = 2,5-diamino-6-hydroxy-4-(5-phosphoribosylamino)-pyrimidine + formate + 2 phosphate + 3 H(+). Its pathway is cofactor biosynthesis; riboflavin biosynthesis; 2-hydroxy-3-oxobutyl phosphate from D-ribulose 5-phosphate: step 1/1. The protein operates within cofactor biosynthesis; riboflavin biosynthesis; 5-amino-6-(D-ribitylamino)uracil from GTP: step 1/4. Involved in riboflavin biosynthesis. Catalyzes both the conversion of D-ribulose 5-phosphate to formate and 3,4-dihydroxy-2-butanone 4-phosphate and the conversion of GTP to 2,5-diamino-6-ribosylamino-4(3H)-pyrimidinone 5'-phosphate (DARP), formate and pyrophosphate. This is Probable bifunctional riboflavin biosynthesis protein RIBA 1, chloroplastic (RIBA1) from Oryza sativa subsp. japonica (Rice).